Consider the following 217-residue polypeptide: Large ribosomal subunit protein uL4 (217 aa).

Residues 46–102 (KRQGTHSAKTRAEVSGGGRKPFRQKGTGRARQGSIRAPHFTGGGISHGPKPRDYSQR) are disordered.

This sequence belongs to the universal ribosomal protein uL4 family. In terms of assembly, part of the 50S ribosomal subunit.

Functionally, one of the primary rRNA binding proteins, this protein initially binds near the 5'-end of the 23S rRNA. It is important during the early stages of 50S assembly. It makes multiple contacts with different domains of the 23S rRNA in the assembled 50S subunit and ribosome. Its function is as follows. Forms part of the polypeptide exit tunnel. This Corynebacterium diphtheriae (strain ATCC 700971 / NCTC 13129 / Biotype gravis) protein is Large ribosomal subunit protein uL4.